The sequence spans 229 residues: MKQVRLLPSATVRAACAVAVAALAGCAQIPRDPIIQQPMTAQPPMPIAMQAPGSIFNPGFAGRPLFEDQRPRNVGDILTIVIAENINATKSSGANTNRQGNTDFNVPTAAFLGGLFAKANLSATGANKFAATGGASAANTFNGTITVTVTNVLPNGNLVVSGEKQMLINQGNEFVRFSGVVNPNTISGANSVYSTQVADARIEYSAKGYINEAETMGWLQRFFLNLAPW.

A signal peptide spans 1–25 (MKQVRLLPSATVRAACAVAVAALAG). Cysteine 26 carries the N-palmitoyl cysteine lipid modification. Cysteine 26 carries S-diacylglycerol cysteine lipidation.

Belongs to the FlgH family. In terms of assembly, the basal body constitutes a major portion of the flagellar organelle and consists of four rings (L,P,S, and M) mounted on a central rod.

It localises to the cell outer membrane. Its subcellular location is the bacterial flagellum basal body. Assembles around the rod to form the L-ring and probably protects the motor/basal body from shearing forces during rotation. The chain is Flagellar L-ring protein from Burkholderia vietnamiensis (strain G4 / LMG 22486) (Burkholderia cepacia (strain R1808)).